Consider the following 507-residue polypeptide: Maturase K (507 aa).

It belongs to the intron maturase 2 family. MatK subfamily.

It is found in the plastid. The protein localises to the chloroplast. Functionally, usually encoded in the trnK tRNA gene intron. Probably assists in splicing its own and other chloroplast group II introns. This Ranunculus repens (Creeping buttercup) protein is Maturase K.